The following is an 89-amino-acid chain: Phytosulfokines 1 (89 aa).

Positions 1–22 (MVNPGRTARALCLLCLALLLLG) are cleaved as a signal peptide. Residues 23-79 (QDTHSRKLLLQEKHSHGVGNGTTTTQEPSRENGGSTGSNNNGQLQFDSAKWEEFHTD) constitute a propeptide that is removed on maturation. The segment at 33–68 (QEKHSHGVGNGTTTTQEPSRENGGSTGSNNNGQLQF) is disordered. A glycan (N-linked (GlcNAc...) asparagine) is linked at N42. A sulfotyrosine mark is found at Y80 and Y82. Positions 85-89 (DVKNP) are excised as a propeptide.

Belongs to the phytosulfokine family. In terms of processing, sulfation is important for activity and for the binding to a putative membrane receptor. PSK-alpha is produced by endopeptidase digestion. PSK-beta is produced from PSK-alpha by exopeptidase digestion. Expressed throughout the seedling. More abundant in fragments containing shoot or root apexes where cells proliferate vigorously.

Its subcellular location is the secreted. In terms of biological role, promotes plant cell differentiation, organogenesis and somatic embryogenesis as well as cell proliferation. This is Phytosulfokines 1 (PSK1) from Oryza sativa subsp. indica (Rice).